The following is a 298-amino-acid chain: Glycine--tRNA ligase alpha subunit (298 aa).

Belongs to the class-II aminoacyl-tRNA synthetase family. In terms of assembly, tetramer of two alpha and two beta subunits.

Its subcellular location is the cytoplasm. The catalysed reaction is tRNA(Gly) + glycine + ATP = glycyl-tRNA(Gly) + AMP + diphosphate. This is Glycine--tRNA ligase alpha subunit from Neisseria meningitidis serogroup C / serotype 2a (strain ATCC 700532 / DSM 15464 / FAM18).